The sequence spans 240 residues: Agamous-like MADS-box protein AGL16 (240 aa).

The region spanning 1 to 61 is the MADS-box domain; it reads MGRGKIAIKR…GRLYDFSSSS (61 aa). Residues 86–176 form the K-box domain; it reads IQFWQKEAAI…HKKVNLMHQQ (91 aa).

Homodimer. Interacts with AGL15, AGL24, AP1, AGL6, AG, AGL1, AGL11, AGL5, SEP3, SEP1, AGL63, AGL14, SOC1 and AGL21. Interacts with AGL63. Interacts with SVP. As to expression, expressed at high levels in leaves, moderate levels in roots, seedlings and stems, and at low levels in flowers, pollen and siliques. Accumulates in leaf guard cells and trichomes. Also present in epidermal cells of roots. Expressed in mature guard cells.

Its subcellular location is the nucleus. Probable transcription factor involved in the regulation of flowering time in long-day photoperiod. Participates in the repression of FT expression and floral transition, by interacting closely with the FLC-SVP pathways. Functions in the satellite meristemoid lineage of stomatal development. The sequence is that of Agamous-like MADS-box protein AGL16 (AGL16) from Arabidopsis thaliana (Mouse-ear cress).